A 341-amino-acid polypeptide reads, in one-letter code: Anthranilate phosphoribosyltransferase (341 aa).

Residues G79, G82 to D83, T87, N89 to T92, K107 to S115, and S119 each bind 5-phospho-alpha-D-ribose 1-diphosphate. G79 contributes to the anthranilate binding site. Mg(2+) is bound at residue S91. N110 is a binding site for anthranilate. R165 contacts anthranilate. The Mg(2+) site is built by D224 and E225.

It belongs to the anthranilate phosphoribosyltransferase family. In terms of assembly, homodimer. Mg(2+) serves as cofactor.

It carries out the reaction N-(5-phospho-beta-D-ribosyl)anthranilate + diphosphate = 5-phospho-alpha-D-ribose 1-diphosphate + anthranilate. The protein operates within amino-acid biosynthesis; L-tryptophan biosynthesis; L-tryptophan from chorismate: step 2/5. In terms of biological role, catalyzes the transfer of the phosphoribosyl group of 5-phosphorylribose-1-pyrophosphate (PRPP) to anthranilate to yield N-(5'-phosphoribosyl)-anthranilate (PRA). The protein is Anthranilate phosphoribosyltransferase of Bacillus cereus (strain G9842).